A 246-amino-acid polypeptide reads, in one-letter code: NH(3)-dependent NAD(+) synthetase (246 aa).

29-36 (GLSGGIDS) provides a ligand contact to ATP. Residue Asp35 participates in Mg(2+) binding. Deamido-NAD(+) is bound at residue Arg110. Residue Thr130 participates in ATP binding. Glu135 contacts Mg(2+). ATP is bound by residues Lys159 and Ser181.

It belongs to the NAD synthetase family. Homodimer.

The enzyme catalyses deamido-NAD(+) + NH4(+) + ATP = AMP + diphosphate + NAD(+) + H(+). It participates in cofactor biosynthesis; NAD(+) biosynthesis; NAD(+) from deamido-NAD(+) (ammonia route): step 1/1. Functionally, catalyzes the ATP-dependent amidation of deamido-NAD to form NAD. Uses ammonia as a nitrogen source. The protein is NH(3)-dependent NAD(+) synthetase of Campylobacter jejuni subsp. doylei (strain ATCC BAA-1458 / RM4099 / 269.97).